The sequence spans 119 residues: ATP-dependent Clp protease adapter protein ClpS (119 aa).

Positions 1 to 33 are disordered; sequence MATRIPKTPSTPPAQKPAGDDGDSVVLERRPQK.

The protein belongs to the ClpS family. As to quaternary structure, binds to the N-terminal domain of the chaperone ClpA.

In terms of biological role, involved in the modulation of the specificity of the ClpAP-mediated ATP-dependent protein degradation. This is ATP-dependent Clp protease adapter protein ClpS from Variovorax paradoxus (strain S110).